We begin with the raw amino-acid sequence, 499 residues long: Glycerol kinase (499 aa).

Residue Thr17 coordinates ADP. ATP is bound by residues Thr17, Thr18, and Ser19. Sn-glycerol 3-phosphate is bound at residue Thr17. Arg21 serves as a coordination point for ADP. The sn-glycerol 3-phosphate site is built by Arg87, Glu88, Tyr139, and Asp243. Arg87, Glu88, Tyr139, Asp243, and Gln244 together coordinate glycerol. Residues Thr265 and Gly308 each contribute to the ADP site. ATP-binding residues include Thr265, Gly308, Gln312, and Gly409. Gly409 and Asn413 together coordinate ADP.

This sequence belongs to the FGGY kinase family.

It catalyses the reaction glycerol + ATP = sn-glycerol 3-phosphate + ADP + H(+). The protein operates within polyol metabolism; glycerol degradation via glycerol kinase pathway; sn-glycerol 3-phosphate from glycerol: step 1/1. With respect to regulation, inhibited by fructose 1,6-bisphosphate (FBP). In terms of biological role, key enzyme in the regulation of glycerol uptake and metabolism. Catalyzes the phosphorylation of glycerol to yield sn-glycerol 3-phosphate. This is Glycerol kinase from Pseudomonas putida (strain ATCC 700007 / DSM 6899 / JCM 31910 / BCRC 17059 / LMG 24140 / F1).